Reading from the N-terminus, the 276-residue chain is MEIYGIVYSVKDPAGFGMAEYIIKYYGLEKSNVCKNAITCYVGNNFVLAGFSEDVIYFDFLDGRLPDKVSRYIVLSRHSSAKKVCSYTVHHTGNFGPEAPYGGRPRTLSIANPIVSHKLLINLSILAEEYGRIDEYEVSYEATHHGPTDVRKPLNFIEIGSTIDEWKDPVNHEIVALAVIKFLENPNHECIPVTGVGGGHYPRKHTKMAFEKNYCYGHIMAKYALQYLSPEILEEMIVKSDPVPQRIIVEKKGTRREHRRIIEQYVLNRGIVLEYI.

This sequence belongs to the DtdA deacylase family. In terms of assembly, monomer. It depends on Zn(2+) as a cofactor.

The enzyme catalyses a D-aminoacyl-tRNA + H2O = a tRNA + a D-alpha-amino acid + H(+). It catalyses the reaction glycyl-tRNA(Ala) + H2O = tRNA(Ala) + glycine + H(+). In terms of biological role, D-aminoacyl-tRNA deacylase with broad substrate specificity. By recycling D-aminoacyl-tRNA to D-amino acids and free tRNA molecules, this enzyme counteracts the toxicity associated with the formation of D-aminoacyl-tRNA entities in vivo. The sequence is that of D-aminoacyl-tRNA deacylase from Staphylothermus marinus (strain ATCC 43588 / DSM 3639 / JCM 9404 / F1).